Consider the following 141-residue polypeptide: Zinc finger protein 593 homolog (141 aa).

The interval 1–32 is disordered; it reads MGRYSGHGGTHTKKKQYKRARSTKNRAKDIDQ. Residues 10–25 show a composition bias toward basic residues; that stretch reads THTKKKQYKRARSTKN. The C2H2-type zinc-finger motif lies at 60-84; the sequence is NYCIHCSKHFVTNEDLQSHIKGKPH.

This sequence belongs to the ZNF593/BUD20 C2H2-type zinc-finger protein family. As to quaternary structure, associates with pre-60S ribosomal particles; released from the pre-60S particle very early in the cytoplasm.

The protein localises to the nucleus. Its subcellular location is the cytoplasm. In terms of biological role, involved in pre-60S ribosomal particles maturation by promoting the nuclear export of the 60S ribosome. The sequence is that of Zinc finger protein 593 homolog from Dictyostelium discoideum (Social amoeba).